The primary structure comprises 659 residues: Protein kinase byr2 (659 aa).

The SAM domain maps to 4–67 (YTSKEVAEWL…LKQRDYLREF (64 aa)). Low complexity predominate over residues 180–190 (PKLSSVLPTST). Disordered stretches follow at residues 180–209 (PKLSSVLPTSTQKRSVRSNNAKPFESYQRP) and 354–387 (SFSPGSSPSFIEQPSPISPTSTTSEDTNTLEEDT). Polar residues predominate over residues 354 to 365 (SFSPGSSPSFIE). The segment covering 367 to 380 (PSPISPTSTTSEDT) has biased composition (low complexity). A Protein kinase domain is found at 394–658 (WIRGALIGSG…ASELLSHPFV (265 aa)). ATP contacts are provided by residues 400–408 (IGSGSFGQV) and Lys423. Residue Asp522 is the Proton acceptor of the active site.

The protein belongs to the protein kinase superfamily. STE Ser/Thr protein kinase family. MAP kinase kinase kinase subfamily. Interacts with rad24 and rad25; these prevent its translocation to the cell membrane during nitrogen starvation.

It localises to the cytoplasm. It is found in the cell membrane. It carries out the reaction L-seryl-[protein] + ATP = O-phospho-L-seryl-[protein] + ADP + H(+). The catalysed reaction is L-threonyl-[protein] + ATP = O-phospho-L-threonyl-[protein] + ADP + H(+). Its function is as follows. Serine/threonine protein kinase involved in conjugation and sporulation. It is thought that it phosphorylates the byr1 protein kinase which itself phosphorylate the spk1 kinase. This Schizosaccharomyces pombe (strain 972 / ATCC 24843) (Fission yeast) protein is Protein kinase byr2.